We begin with the raw amino-acid sequence, 356 residues long: Altered inheritance of mitochondria protein 23, mitochondrial (356 aa).

The N-terminal 32 residues, Met1–Asp32, are a transit peptide targeting the mitochondrion.

The protein belongs to the AIM23 family.

It localises to the mitochondrion. The protein is Altered inheritance of mitochondria protein 23, mitochondrial (AIM23) of Saccharomyces cerevisiae (strain ATCC 204508 / S288c) (Baker's yeast).